Reading from the N-terminus, the 244-residue chain is UPF0246 protein FMG_1068 (244 aa).

It belongs to the UPF0246 family.

This is UPF0246 protein FMG_1068 from Finegoldia magna (strain ATCC 29328 / DSM 20472 / WAL 2508) (Peptostreptococcus magnus).